The primary structure comprises 336 residues: GTP 3',8-cyclase (336 aa).

The Radical SAM core domain occupies 17–238 (GFSRRFHYLR…WTQQNRNLTD (222 aa)). Arg-26 lines the GTP pocket. 2 residues coordinate [4Fe-4S] cluster: Cys-33 and Cys-37. Tyr-39 is an S-adenosyl-L-methionine binding site. Residue Cys-40 coordinates [4Fe-4S] cluster. Arg-75 contacts GTP. An S-adenosyl-L-methionine-binding site is contributed by Gly-79. Residue Thr-106 coordinates GTP. S-adenosyl-L-methionine is bound at residue Ser-130. Residue Lys-167 coordinates GTP. Residue Met-201 participates in S-adenosyl-L-methionine binding. The [4Fe-4S] cluster site is built by Cys-264 and Cys-267. Residue 269 to 271 (RLR) participates in GTP binding. Cys-281 is a [4Fe-4S] cluster binding site.

Belongs to the radical SAM superfamily. MoaA family. As to quaternary structure, monomer and homodimer. [4Fe-4S] cluster serves as cofactor.

The catalysed reaction is GTP + AH2 + S-adenosyl-L-methionine = (8S)-3',8-cyclo-7,8-dihydroguanosine 5'-triphosphate + 5'-deoxyadenosine + L-methionine + A + H(+). The protein operates within cofactor biosynthesis; molybdopterin biosynthesis. Catalyzes the cyclization of GTP to (8S)-3',8-cyclo-7,8-dihydroguanosine 5'-triphosphate. This is GTP 3',8-cyclase from Tolumonas auensis (strain DSM 9187 / NBRC 110442 / TA 4).